A 577-amino-acid polypeptide reads, in one-letter code: Moesin (577 aa).

In terms of domain architecture, FERM spans 2–295 (PKTINVRVTT…GNHELYMRRR (294 aa)). At S74 the chain carries Phosphoserine. Residue K79 is modified to N6-acetyllysine. K83 is modified (N6-succinyllysine). A [IL]-x-C-x-x-[DE] motif motif is present at residues 115–120 (IYCPPE). Y116 bears the Phosphotyrosine mark. At C117 the chain carries S-nitrosocysteine. N6-acetyllysine is present on residues K139 and K165. The span at 375–401 (LEQERKRAQSEAEKLAKERQEAEEAKE) shows a compositional bias: basic and acidic residues. Disordered stretches follow at residues 375–409 (LEQERKRAQSEAEKLAKERQEAEEAKEALLQASQD) and 466–518 (AMST…NERV). S407 is modified (phosphoserine). The segment covering 476–487 (AENEQDEQDENG) has biased composition (acidic residues). Residues 492–518 (AELRADAMAKDRSEEERTTEAEKNERV) show a composition bias toward basic and acidic residues. Residue S527 is modified to Phosphoserine. A Phosphothreonine; by ROCK2 and STK10 modification is found at T558.

In resting T-cells, part of a PAG1-NHERF1-MSN complex which is disrupted upon TCR activation. Interacts with NHERF1. Interacts with PPP1R16B. Interacts with PDZD8. Interacts with SELPLG and SYK; these interactions mediate the activation of SYK by SELPLG. Interacts with PDPN (via cytoplasmic domain); this interaction activates RHOA and promotes epithelial-mesenchymal transition. Interacts with SPN/CD43 cytoplasmic tail. Interacts with CD44. Interacts with ICAM2. Interacts with ICAM3 (via C-terminus). Interacts with PDZD8. Interacts with F-actin. Interacts with CD46. Interacts with PTPN6. In terms of processing, phosphorylation on Thr-558 is crucial for the formation of microvilli-like structures. Phosphorylation by ROCK2 suppresses the head-to-tail association of the N-terminal and C-terminal halves resulting in an opened conformation which is capable of actin and membrane-binding. Phosphorylation on Thr-558 by STK10 negatively regulates lymphocyte migration and polarization. S-nitrosylation of Cys-117 is induced by interferon-gamma and oxidatively-modified low-densitity lipoprotein (LDL(ox)) implicating the iNOS-S100A8/9 transnitrosylase complex.

It localises to the cell membrane. Its subcellular location is the cytoplasm. The protein localises to the cytoskeleton. It is found in the apical cell membrane. The protein resides in the cell projection. It localises to the microvillus membrane. Its subcellular location is the microvillus. Its activity is regulated as follows. A head-to-tail association, of the N-terminal and C-terminal halves results in a closed conformation (inactive form) which is incapable of actin or membrane-binding. Its function is as follows. Ezrin-radixin-moesin (ERM) family protein that connects the actin cytoskeleton to the plasma membrane and thereby regulates the structure and function of specific domains of the cell cortex. Tethers actin filaments by oscillating between a resting and an activated state providing transient interactions between moesin and the actin cytoskeleton. Once phosphorylated on its C-terminal threonine, moesin is activated leading to interaction with F-actin and cytoskeletal rearrangement. These rearrangements regulate many cellular processes, including cell shape determination, membrane transport, and signal transduction. The role of moesin is particularly important in immunity acting on both T and B-cells homeostasis and self-tolerance, regulating lymphocyte egress from lymphoid organs. Modulates phagolysosomal biogenesis in macrophages. Participates also in immunologic synapse formation. In Bos taurus (Bovine), this protein is Moesin.